The sequence spans 376 residues: N-acetyldiaminopimelate deacetylase (376 aa).

Asp69 is an active-site residue. Residue Glu128 is the Proton acceptor of the active site.

The protein belongs to the peptidase M20A family. N-acetyldiaminopimelate deacetylase subfamily.

It catalyses the reaction N-acetyl-(2S,6S)-2,6-diaminopimelate + H2O = (2S,6S)-2,6-diaminopimelate + acetate. It participates in amino-acid biosynthesis; L-lysine biosynthesis via DAP pathway; LL-2,6-diaminopimelate from (S)-tetrahydrodipicolinate (acetylase route): step 3/3. In terms of biological role, catalyzes the conversion of N-acetyl-diaminopimelate to diaminopimelate and acetate. The sequence is that of N-acetyldiaminopimelate deacetylase from Bacillus anthracis (strain A0248).